We begin with the raw amino-acid sequence, 124 residues long: Ribonuclease pancreatic (124 aa).

K7 and R10 together coordinate substrate. Residue H12 is the Proton acceptor of the active site. Cystine bridges form between C26–C84, C40–C95, C58–C110, and C65–C72. An N-linked (GlcNAc...) asparagine glycan is attached at N34. Residues 41 to 45 (KPVNT), K66, and R85 each bind substrate. H119 serves as the catalytic Proton donor.

The protein belongs to the pancreatic ribonuclease family. Monomer. Interacts with and forms tight 1:1 complexes with RNH1. Dimerization of two such complexes may occur. Interaction with RNH1 inhibits this protein. In terms of tissue distribution, pancreas.

Its subcellular location is the secreted. It catalyses the reaction an [RNA] containing cytidine + H2O = an [RNA]-3'-cytidine-3'-phosphate + a 5'-hydroxy-ribonucleotide-3'-[RNA].. The enzyme catalyses an [RNA] containing uridine + H2O = an [RNA]-3'-uridine-3'-phosphate + a 5'-hydroxy-ribonucleotide-3'-[RNA].. Endonuclease that catalyzes the cleavage of RNA on the 3' side of pyrimidine nucleotides. Acts on single-stranded and double-stranded RNA. This is Ribonuclease pancreatic (RNASE1) from Eudorcas thomsonii (Thomson's gazelle).